A 329-amino-acid chain; its full sequence is Ketol-acid reductoisomerase (NADP(+)) (329 aa).

The KARI N-terminal Rossmann domain maps to 2 to 182 (TQLFYDTDAD…GGTRAGILET (181 aa)). NADP(+) is bound by residues 25–28 (YGSQ), Ser51, Ser53, and 83–86 (DEFQ). His108 is an active-site residue. Position 134 (Gly134) interacts with NADP(+). Residues 183-328 (NFKEETETDL…KGLRSMFSWL (146 aa)) enclose the KARI C-terminal knotted domain. 4 residues coordinate Mg(2+): Asp191, Glu195, Glu227, and Glu231. Ser252 lines the substrate pocket.

Belongs to the ketol-acid reductoisomerase family. It depends on Mg(2+) as a cofactor.

The catalysed reaction is (2R)-2,3-dihydroxy-3-methylbutanoate + NADP(+) = (2S)-2-acetolactate + NADPH + H(+). It catalyses the reaction (2R,3R)-2,3-dihydroxy-3-methylpentanoate + NADP(+) = (S)-2-ethyl-2-hydroxy-3-oxobutanoate + NADPH + H(+). Its pathway is amino-acid biosynthesis; L-isoleucine biosynthesis; L-isoleucine from 2-oxobutanoate: step 2/4. It functions in the pathway amino-acid biosynthesis; L-valine biosynthesis; L-valine from pyruvate: step 2/4. In terms of biological role, involved in the biosynthesis of branched-chain amino acids (BCAA). Catalyzes an alkyl-migration followed by a ketol-acid reduction of (S)-2-acetolactate (S2AL) to yield (R)-2,3-dihydroxy-isovalerate. In the isomerase reaction, S2AL is rearranged via a Mg-dependent methyl migration to produce 3-hydroxy-3-methyl-2-ketobutyrate (HMKB). In the reductase reaction, this 2-ketoacid undergoes a metal-dependent reduction by NADPH to yield (R)-2,3-dihydroxy-isovalerate. The polypeptide is Ketol-acid reductoisomerase (NADP(+)) (Prochlorococcus marinus (strain MIT 9215)).